Here is a 775-residue protein sequence, read N- to C-terminus: Aconitate hydratase, mitochondrial (775 aa).

A mitochondrion-targeting transit peptide spans Met-1–Asp-25. Residues Gln-95 and Asp-188–His-190 contribute to the substrate site. N-linked (GlcNAc...) asparagine glycosylation occurs at Asn-337. Position 381 (Cys-381) interacts with [4Fe-4S] cluster. N-linked (GlcNAc...) asparagine glycosylation is present at Asn-383. [4Fe-4S] cluster-binding residues include Cys-444 and Cys-447. Residue Arg-470 coordinates substrate. Asn-471 carries N-linked (GlcNAc...) asparagine glycosylation. Positions 475 and 603 each coordinate substrate. Asn-608 carries N-linked (GlcNAc...) asparagine glycosylation. Position 666 to 667 (Ser-666 to Arg-667) interacts with substrate. Asn-754 and Asn-763 each carry an N-linked (GlcNAc...) asparagine glycan.

This sequence belongs to the aconitase/IPM isomerase family. In terms of assembly, monomer. [4Fe-4S] cluster is required as a cofactor.

It localises to the mitochondrion. It catalyses the reaction citrate = D-threo-isocitrate. The protein operates within carbohydrate metabolism; tricarboxylic acid cycle; isocitrate from oxaloacetate: step 2/2. In terms of biological role, catalyzes the isomerization of citrate to isocitrate via cis-aconitate. This Arthroderma benhamiae (strain ATCC MYA-4681 / CBS 112371) (Trichophyton mentagrophytes) protein is Aconitate hydratase, mitochondrial.